A 125-amino-acid polypeptide reads, in one-letter code: Small ribosomal subunit protein uS12c (125 aa).

This sequence belongs to the universal ribosomal protein uS12 family. As to quaternary structure, part of the 30S ribosomal subunit.

The protein resides in the plastid. The protein localises to the chloroplast. Its function is as follows. With S4 and S5 plays an important role in translational accuracy. Located at the interface of the 30S and 50S subunits. The chain is Small ribosomal subunit protein uS12c (rps12) from Oltmannsiellopsis viridis (Marine flagellate).